The chain runs to 150 residues: Deoxyuridine 5'-triphosphate nucleotidohydrolase (150 aa).

Substrate is bound by residues 69 to 71 (RSG), Asn82, 86 to 88 (TID), and Lys96.

This sequence belongs to the dUTPase family. Mg(2+) is required as a cofactor.

The enzyme catalyses dUTP + H2O = dUMP + diphosphate + H(+). Its pathway is pyrimidine metabolism; dUMP biosynthesis; dUMP from dCTP (dUTP route): step 2/2. Its function is as follows. This enzyme is involved in nucleotide metabolism: it produces dUMP, the immediate precursor of thymidine nucleotides and it decreases the intracellular concentration of dUTP so that uracil cannot be incorporated into DNA. This Aquifex aeolicus (strain VF5) protein is Deoxyuridine 5'-triphosphate nucleotidohydrolase.